A 345-amino-acid chain; its full sequence is Arginine N-succinyltransferase (345 aa).

Leucine 125 is a succinyl-CoA binding site. The active-site Proton donor is the histidine 229.

The protein belongs to the arginine N-succinyltransferase family.

The catalysed reaction is succinyl-CoA + L-arginine = N(2)-succinyl-L-arginine + CoA + H(+). Its pathway is amino-acid degradation; L-arginine degradation via AST pathway; L-glutamate and succinate from L-arginine: step 1/5. Catalyzes the transfer of succinyl-CoA to arginine to produce N(2)-succinylarginine. In Yersinia enterocolitica serotype O:8 / biotype 1B (strain NCTC 13174 / 8081), this protein is Arginine N-succinyltransferase.